Reading from the N-terminus, the 75-residue chain is Large ribosomal subunit protein bL31 (75 aa).

Zn(2+) contacts are provided by Cys-16, Cys-18, Cys-37, and Cys-40.

It belongs to the bacterial ribosomal protein bL31 family. Type A subfamily. As to quaternary structure, part of the 50S ribosomal subunit. Requires Zn(2+) as cofactor.

Its function is as follows. Binds the 23S rRNA. This is Large ribosomal subunit protein bL31 from Pseudomonas syringae pv. tomato (strain ATCC BAA-871 / DC3000).